The sequence spans 406 residues: Putative colanic acid biosynthesis glycosyltransferase WcaL (406 aa).

Belongs to the glycosyltransferase group 1 family. Glycosyltransferase 4 subfamily.

Its pathway is slime biogenesis; slime polysaccharide biosynthesis. The sequence is that of Putative colanic acid biosynthesis glycosyltransferase WcaL (wcaL) from Salmonella typhimurium (strain LT2 / SGSC1412 / ATCC 700720).